The chain runs to 331 residues: MGKPITLSWEAITEKALKNERITLQEGLDILEADDRELLSIMHAAYQVRFHFFQNKVKLNMIFNAKSGYCPENCGYCSQSIISNAPVERYTMLDQKTIVAGAREALKRKAGTYCIVASGRAPSHRELDEVTAAVKEITETMPLKVCACLGLLNEDKAKRLKEAGVHRYNHNINTHQDHHPHITTTHTYHDRLSTLKKVKQSGMSPCSGVIIGMGETNQQIVEMAFALRAIDADSIPVNFLHAIEGTPLEHQERTHPIKALKVLALMRFVNPTKEIRVSGGREFNLRTLQPLALYAANSIFVGDYLTTKGQQVQTDHHIIEDLGFDIEECAL.

The Radical SAM core domain occupies 52–281; it reads FFQNKVKLNM…TKEIRVSGGR (230 aa). Residues cysteine 70, cysteine 74, and cysteine 77 each contribute to the [4Fe-4S] cluster site. Cysteine 114, cysteine 146, cysteine 206, and arginine 276 together coordinate [2Fe-2S] cluster.

The protein belongs to the radical SAM superfamily. Biotin synthase family. In terms of assembly, homodimer. [4Fe-4S] cluster is required as a cofactor. Requires [2Fe-2S] cluster as cofactor.

It catalyses the reaction (4R,5S)-dethiobiotin + (sulfur carrier)-SH + 2 reduced [2Fe-2S]-[ferredoxin] + 2 S-adenosyl-L-methionine = (sulfur carrier)-H + biotin + 2 5'-deoxyadenosine + 2 L-methionine + 2 oxidized [2Fe-2S]-[ferredoxin]. Its pathway is cofactor biosynthesis; biotin biosynthesis; biotin from 7,8-diaminononanoate: step 2/2. Its function is as follows. Catalyzes the conversion of dethiobiotin (DTB) to biotin by the insertion of a sulfur atom into dethiobiotin via a radical-based mechanism. This is Biotin synthase from Bacillus pumilus (strain SAFR-032).